The primary structure comprises 201 residues: Recombination protein RecR (201 aa).

The C4-type zinc finger occupies 60-75 (CSVCGNIDTTDPCSIC). Residues 83–178 (GTIIVVEDIS…KITRLAHGVP (96 aa)) enclose the Toprim domain.

The protein belongs to the RecR family.

In terms of biological role, may play a role in DNA repair. It seems to be involved in an RecBC-independent recombinational process of DNA repair. It may act with RecF and RecO. In Bartonella bacilliformis (strain ATCC 35685 / KC583 / Herrer 020/F12,63), this protein is Recombination protein RecR.